Here is a 674-residue protein sequence, read N- to C-terminus: Sodium/hydrogen exchanger 1 (674 aa).

The first 24 residues, 1 to 24, serve as a signal peptide directing secretion; it reads MKLNKSYILIVVLLLSLFYSSVSS. Residues 31–65 are disordered; that stretch reads KSNNHYNSDNSNNDNKNININNNNDGDGDDDDDNN. The segment covering 37 to 55 has biased composition (low complexity); it reads NSDNSNNDNKNININNNND. 12 helical membrane-spanning segments follow: residues 120–140, 144–164, 175–195, 213–233, 275–297, 314–334, 336–356, 359–379, 401–421, 432–452, 460–480, and 499–519; these read TIIF…YFII, IPFV…GIVF, VVSF…IFET, MFAV…IYIV, LYIL…YSVV, VVAI…SLIL, WINI…FSYM, VLAG…GITL, TAAF…LTAH, WSIL…CFLL, IPWV…FAFS, and NTLL…YPLL. Residues 591 to 674 form a disordered region; it reads HELDSNPLRF…NKNNDTLPLI (84 aa). The segment covering 601–618 has biased composition (acidic residues); it reads DDDEEDDDDEDLDFDSDL. Residues 627 to 657 show a composition bias toward low complexity; sequence DSIHQSDNNNNDNGNNNNNNNNIIINNNSQH. Residues 662–674 show a composition bias toward polar residues; the sequence is GSNNKNNDTLPLI.

The protein belongs to the monovalent cation:proton antiporter 1 (CPA1) transporter (TC 2.A.36) family.

The protein localises to the membrane. Its activity is regulated as follows. LY294002, an inhibitor of the catalytic subunit of PI3-kinase, blocks NHE1-dependent (but not NHE1-independent) increase in intracellular pH in response to cAMP. Functionally, regulation of intracellular pH homeostasis in response to cAMP, which is essential for chemotaxis. Necessary for F-actin localization and the kinetics of actin polymerization during chemotaxis and cell polarity but not for directional sensing. The polypeptide is Sodium/hydrogen exchanger 1 (nhe1) (Dictyostelium discoideum (Social amoeba)).